The primary structure comprises 138 residues: Phosphoribosyl-AMP cyclohydrolase (138 aa).

The tract at residues 1–23 (MSEQSAPSPTPAAELSSDPASPL) is disordered. Aspartate 100 is a Mg(2+) binding site. Residue cysteine 101 coordinates Zn(2+). Mg(2+)-binding residues include aspartate 102 and aspartate 104. 2 residues coordinate Zn(2+): cysteine 117 and cysteine 124.

The protein belongs to the PRA-CH family. Homodimer. Mg(2+) serves as cofactor. Requires Zn(2+) as cofactor.

It is found in the cytoplasm. The enzyme catalyses 1-(5-phospho-beta-D-ribosyl)-5'-AMP + H2O = 1-(5-phospho-beta-D-ribosyl)-5-[(5-phospho-beta-D-ribosylamino)methylideneamino]imidazole-4-carboxamide. The protein operates within amino-acid biosynthesis; L-histidine biosynthesis; L-histidine from 5-phospho-alpha-D-ribose 1-diphosphate: step 3/9. Its function is as follows. Catalyzes the hydrolysis of the adenine ring of phosphoribosyl-AMP. This chain is Phosphoribosyl-AMP cyclohydrolase, found in Paenarthrobacter aurescens (strain TC1).